A 488-amino-acid chain; its full sequence is N-acyl-D-glutamate deacylase (488 aa).

Belongs to the metallo-dependent hydrolases superfamily. N-acyl-D-amino-acid deacylase family. Zn(2+) is required as a cofactor.

It is found in the cytoplasm. The enzyme catalyses an N-acyl-D-glutamate + H2O = D-glutamate + a carboxylate. With respect to regulation, inhibited by cobalt, copper and EDTA. In Alcaligenes xylosoxydans xylosoxydans (Achromobacter xylosoxidans), this protein is N-acyl-D-glutamate deacylase.